Consider the following 350-residue polypeptide: Ion-translocating oxidoreductase complex subunit D (350 aa).

The next 3 membrane-spanning stretches (helical) occupy residues Cys36–Ala56, Ile89–Val109, and Ala124–Ala144. Residue Thr185 is modified to FMN phosphoryl threonine. Helical transmembrane passes span Gly212 to Leu232, Trp239 to Leu259, Met265 to Thr285, Leu298 to Pro318, and Asp319 to Val339.

This sequence belongs to the NqrB/RnfD family. As to quaternary structure, the complex is composed of six subunits: RnfA, RnfB, RnfC, RnfD, RnfE and RnfG. The cofactor is FMN.

It is found in the cell inner membrane. Its function is as follows. Part of a membrane-bound complex that couples electron transfer with translocation of ions across the membrane. The sequence is that of Ion-translocating oxidoreductase complex subunit D from Shewanella loihica (strain ATCC BAA-1088 / PV-4).